Here is a 220-residue protein sequence, read N- to C-terminus: uncharacterized protein (220 aa).

Positions 165–202 (DKYEDLISDYNKIMEKYREVIKSEIEKYKALSKRKNDI) form a coiled coil.

This is an uncharacterized protein from Pasteurella multocida (strain Pm70).